Here is a 487-residue protein sequence, read N- to C-terminus: MSLPNSSCLLEDKMCESNKTTMASPQLMPLVVVLSTICLVTVGLNLLVLYAVRSERKLHTVGNLYIVSLSVADLIVGAVVMPMNILYLLMSKWSLGRPLCLFWLSMDYVASTASIFSVFILCIDRYRSVQQPLRYLKYRTKTRASATILGAWFLSFLWVIPILGWNHFMQQTSVRREDKCETDFYDVTWFKVMTAIINFYLPTLLMLWFYAKIYKAVRQHCQHRELINGSLPSFSEIKLRPENPKGDAKKPGKESPWEVLKRKPKDAGGGSVLKSPSQTPKEMKSPVVFSQEDDREVDKLHCFPLDIVHMQTAAEGSSRDYVAVNQSHGQLKTDEQGLNTHGASEISEDQMLGDSQSFSRTDSDTTTETASGKGKLRSGSNTGLGYIKFTWKRLRSHSRQYVSGLHMNRERKAAKQLGFIMAAFILCWIPYFIFFMVIAFCKNCCNEHLHMFTIWLGYINSTLNPLIYPLCNENFKKTFKRILHIRS.

Residues 1 to 29 lie on the Extracellular side of the membrane; it reads MSLPNSSCLLEDKMCESNKTTMASPQLMP. N-linked (GlcNAc...) asparagine glycans are attached at residues Asn-5 and Asn-18. A helical membrane pass occupies residues 30–50; sequence LVVVLSTICLVTVGLNLLVLY. The Cytoplasmic portion of the chain corresponds to 51-64; sequence AVRSERKLHTVGNL. A helical membrane pass occupies residues 65-89; sequence YIVSLSVADLIVGAVVMPMNILYLL. Residues 90 to 97 are Extracellular-facing; that stretch reads MSKWSLGR. Residues 98 to 123 form a helical membrane-spanning segment; it reads PLCLFWLSMDYVASTASIFSVFILCI. Cys-100 and Cys-180 form a disulfide bridge. Positions 107 and 112 each coordinate histamine. The important for agonist binding stretch occupies residues 107–112; that stretch reads DYVAST. The Cytoplasmic portion of the chain corresponds to 124–144; that stretch reads DRYRSVQQPLRYLKYRTKTRA. Phosphothreonine is present on residues Thr-140 and Thr-142. The chain crosses the membrane as a helical span at residues 145-164; sequence SATILGAWFLSFLWVIPILG. Residues 165–188 lie on the Extracellular side of the membrane; it reads WNHFMQQTSVRREDKCETDFYDVT. Residues 189-211 form a helical membrane-spanning segment; that stretch reads WFKVMTAIINFYLPTLLMLWFYA. A histamine-binding site is contributed by Asn-198. Residues 212–416 are Cytoplasmic-facing; that stretch reads KIYKAVRQHC…MNRERKAAKQ (205 aa). Phosphoserine is present on Ser-230. The span at 238–261 shows a compositional bias: basic and acidic residues; it reads KLRPENPKGDAKKPGKESPWEVLK. A disordered region spans residues 238–292; that stretch reads KLRPENPKGDAKKPGKESPWEVLKRKPKDAGGGSVLKSPSQTPKEMKSPVVFSQE. Position 279 is a phosphothreonine (Thr-279). Phosphoserine occurs at positions 344 and 347. A disordered region spans residues 345–377; it reads EISEDQMLGDSQSFSRTDSDTTTETASGKGKLR. Polar residues predominate over residues 353–370; it reads GDSQSFSRTDSDTTTETA. A phosphoserine mark is found at Ser-380, Ser-396, and Ser-398. A helical membrane pass occupies residues 417–440; sequence LGFIMAAFILCWIPYFIFFMVIAF. Residues 424-428 form an important for agonist binding region; it reads FILCW. Tyr-431 contacts histamine. The cysteines at positions 441 and 444 are disulfide-linked. Residues 441-446 are Extracellular-facing; sequence CKNCCN. Residues 447 to 469 traverse the membrane as a helical segment; it reads EHLHMFTIWLGYINSTLNPLIYP. At 470–487 the chain is on the cytoplasmic side; the sequence is LCNENFKKTFKRILHIRS.

The protein belongs to the G-protein coupled receptor 1 family. Phosphorylation at sites in the second and third cytoplasmic loops independently contribute to agonist-induced receptor down-regulation.

It is found in the cell membrane. G-protein-coupled receptor for histamine, a biogenic amine that functions as an immune modulator and a neurotransmitter. Through the H1 receptor, histamine mediates the contraction of smooth muscles and increases capillary permeability due to contraction of terminal venules. Also mediates neurotransmission in the central nervous system and thereby regulates circadian rhythms, emotional and locomotor activities as well as cognitive functions. This Gorilla gorilla gorilla (Western lowland gorilla) protein is Histamine H1 receptor.